The primary structure comprises 23 residues: Hongotoxin-4 (23 aa).

The protein belongs to the short scorpion toxin superfamily. Potassium channel inhibitor family. Alpha-KTx 02 subfamily. In terms of tissue distribution, expressed by the venom gland.

The protein localises to the secreted. In terms of biological role, potent selective inhibitor of Kv1/KCNA voltage-gated potassium channels. This chain is Hongotoxin-4, found in Centruroides limbatus (Bark scorpion).